A 249-amino-acid chain; its full sequence is Vitamin B12 import ATP-binding protein BtuD (249 aa).

The region spanning 1–233 is the ABC transporter domain; sequence MSIVMQLQDV…PNLAQAYGMN (233 aa). 33–40 contacts ATP; that stretch reads GPNGAGKS.

Belongs to the ABC transporter superfamily. Vitamin B12 importer (TC 3.A.1.13.1) family. The complex is composed of two ATP-binding proteins (BtuD), two transmembrane proteins (BtuC) and a solute-binding protein (BtuF).

It is found in the cell inner membrane. The catalysed reaction is an R-cob(III)alamin(out) + ATP + H2O = an R-cob(III)alamin(in) + ADP + phosphate + H(+). In terms of biological role, part of the ABC transporter complex BtuCDF involved in vitamin B12 import. Responsible for energy coupling to the transport system. In Escherichia coli (strain K12 / DH10B), this protein is Vitamin B12 import ATP-binding protein BtuD.